The following is a 367-amino-acid chain: Heme A synthase (367 aa).

Helical transmembrane passes span 25 to 45 (ALRF…LVGG), 111 to 131 (LIAR…WLTG), 139 to 159 (WPLV…WWMV), 174 to 194 (LATH…IMRG), and 210 to 230 (GFAA…ALVA). Residue His274 coordinates heme. 3 consecutive transmembrane segments (helical) span residues 276 to 296 (IGAY…LRAA), 305 to 325 (AVVL…TLLM), and 327 to 347 (VPLH…GFAI). A heme-binding site is contributed by His335.

It belongs to the COX15/CtaA family. Type 2 subfamily. As to quaternary structure, interacts with CtaB. Heme b is required as a cofactor.

The protein localises to the cell membrane. The catalysed reaction is Fe(II)-heme o + 2 A + H2O = Fe(II)-heme a + 2 AH2. Its pathway is porphyrin-containing compound metabolism; heme A biosynthesis; heme A from heme O: step 1/1. Its function is as follows. Catalyzes the conversion of heme O to heme A by two successive hydroxylations of the methyl group at C8. The first hydroxylation forms heme I, the second hydroxylation results in an unstable dihydroxymethyl group, which spontaneously dehydrates, resulting in the formyl group of heme A. The chain is Heme A synthase from Rhizobium leguminosarum bv. trifolii (strain WSM2304).